The chain runs to 93 residues: MATFKKFNKDKRPKRNTQSLLFKRKRFCRFTVTGVEEIDYKDVDTLRDFIAENGKIIPARLTGTRAIFQRQLNTAIKRARFLALVPYSDQHKI.

Belongs to the bacterial ribosomal protein bS18 family. In terms of assembly, part of the 30S ribosomal subunit. Forms a tight heterodimer with protein bS6.

Its function is as follows. Binds as a heterodimer with protein bS6 to the central domain of the 16S rRNA, where it helps stabilize the platform of the 30S subunit. The chain is Small ribosomal subunit protein bS18 from Verminephrobacter eiseniae (strain EF01-2).